The chain runs to 102 residues: Carboxysome shell protein CcmK3 (102 aa).

Residues 4-90 (AVGVIQTDGF…PPDNVETVMP (87 aa)) enclose the BMC domain.

It belongs to the bacterial microcompartments protein family. CcmK subfamily. Interacts stably with CcmK4, forming heterohexamers that can make dodecamers. Heterohexamers have a 1:2 CcmK3:CcmK4 stoichiometry. Upon expression in E.coli forms oligomers that could be dimers or trimers, but never hexamers; bulky residues in the pore region probably preclude the formation of homohexamers.

It is found in the carboxysome. Functionally, a probably non-essential, minor shell protein of the carboxysome, a polyhedral inclusion where RuBisCO (ribulose bisphosphate carboxylase, rbcL-rbcS) is sequestered. Hexamers form sheets that form the facets of the polyhedral carboxysome. In PCC 7418 there are several CcmK paralogs with presumably functional differences. This subunit probably only makes heterohexamers with CcmK4. Heterohexamers can also make dodecamers, formation depends on buffer conditions. This Halothece sp. (strain PCC 7418) (Synechococcus sp. (strain PCC 7418)) protein is Carboxysome shell protein CcmK3.